The following is a 90-amino-acid chain: UPF0512 protein L (90 aa).

This sequence belongs to the UPF0512 family.

In Dictyostelium discoideum (Social amoeba), this protein is UPF0512 protein L.